We begin with the raw amino-acid sequence, 293 residues long: tRNA pseudouridine synthase B (293 aa).

The Nucleophile role is filled by Asp39.

This sequence belongs to the pseudouridine synthase TruB family. Type 1 subfamily.

It catalyses the reaction uridine(55) in tRNA = pseudouridine(55) in tRNA. Responsible for synthesis of pseudouridine from uracil-55 in the psi GC loop of transfer RNAs. The protein is tRNA pseudouridine synthase B of Rickettsia bellii (strain RML369-C).